The primary structure comprises 508 residues: Photosystem II CP47 reaction center protein (508 aa).

The next 6 membrane-spanning stretches (helical) occupy residues 21–36 (AVHL…WAGS), 101–115 (IVLS…IWHW), 140–156 (GIHL…FGAF), 203–218 (IAAG…FHLS), 237–252 (VLSS…AFVV), and 457–472 (TFAL…HGAR).

This sequence belongs to the PsbB/PsbC family. PsbB subfamily. As to quaternary structure, PSII is composed of 1 copy each of membrane proteins PsbA, PsbB, PsbC, PsbD, PsbE, PsbF, PsbH, PsbI, PsbJ, PsbK, PsbL, PsbM, PsbT, PsbX, PsbY, PsbZ, Psb30/Ycf12, at least 3 peripheral proteins of the oxygen-evolving complex and a large number of cofactors. It forms dimeric complexes. It depends on Binds multiple chlorophylls. PSII binds additional chlorophylls, carotenoids and specific lipids. as a cofactor.

It is found in the plastid. The protein resides in the chloroplast thylakoid membrane. In terms of biological role, one of the components of the core complex of photosystem II (PSII). It binds chlorophyll and helps catalyze the primary light-induced photochemical processes of PSII. PSII is a light-driven water:plastoquinone oxidoreductase, using light energy to abstract electrons from H(2)O, generating O(2) and a proton gradient subsequently used for ATP formation. The chain is Photosystem II CP47 reaction center protein from Marchantia polymorpha (Common liverwort).